The primary structure comprises 114 residues: Probable prefoldin subunit 2 (114 aa).

It belongs to the prefoldin subunit beta family. As to quaternary structure, heterohexamer of two PFD-alpha type and four PFD-beta type subunits.

Binds specifically to cytosolic chaperonin (c-CPN) and transfers target proteins to it. Binds to nascent polypeptide chain and promotes folding in an environment in which there are many competing pathways for nonnative proteins. The protein is Probable prefoldin subunit 2 of Schizosaccharomyces pombe (strain 972 / ATCC 24843) (Fission yeast).